A 382-amino-acid chain; its full sequence is Histidinol-phosphate aminotransferase (382 aa).

Lys-215 carries the N6-(pyridoxal phosphate)lysine modification. The segment at 363–382 (NIDNQNKTYSQTSSIRKGTI) is disordered.

The protein belongs to the class-II pyridoxal-phosphate-dependent aminotransferase family. Histidinol-phosphate aminotransferase subfamily. In terms of assembly, homodimer. Pyridoxal 5'-phosphate serves as cofactor.

It carries out the reaction L-histidinol phosphate + 2-oxoglutarate = 3-(imidazol-4-yl)-2-oxopropyl phosphate + L-glutamate. It participates in amino-acid biosynthesis; L-histidine biosynthesis; L-histidine from 5-phospho-alpha-D-ribose 1-diphosphate: step 7/9. The protein is Histidinol-phosphate aminotransferase of Yersinia pestis bv. Antiqua (strain Antiqua).